Reading from the N-terminus, the 175-residue chain is Large ribosomal subunit protein uL10 (175 aa).

This sequence belongs to the universal ribosomal protein uL10 family. As to quaternary structure, part of the ribosomal stalk of the 50S ribosomal subunit. The N-terminus interacts with L11 and the large rRNA to form the base of the stalk. The C-terminus forms an elongated spine to which L12 dimers bind in a sequential fashion forming a multimeric L10(L12)X complex.

In terms of biological role, forms part of the ribosomal stalk, playing a central role in the interaction of the ribosome with GTP-bound translation factors. The polypeptide is Large ribosomal subunit protein uL10 (Synechococcus sp. (strain CC9902)).